The sequence spans 545 residues: E3 ubiquitin-protein ligase ipaH9.8 (545 aa).

Residues 1 to 242 (MLPINNNFSL…YHGPRIYFSM (242 aa)) form an interaction with target proteins region. LRR repeat units follow at residues 57-77 (NSDE…NLPA), 78-99 (QITL…PVTL), 100-117 (KKLY…VLPP), 118-139 (ALES…PDSL), 140-157 (LTMN…SLPQ), 158-179 (ALKN…SEGN), 182-203 (VVRE…ILNL), and 205-228 (NECS…QRLT). The linker stretch occupies residues 243-250 (SDGQQNTL). The tract at residues 251–545 (HRPLADAVTA…SENGSQLHHS (295 aa)) is E3 ubiquitin-protein ligase catalytic domain. One can recognise an NEL domain in the interval 253 to 545 (PLADAVTAWF…SENGSQLHHS (293 aa)). Cysteine 337 serves as the catalytic Glycyl thioester intermediate.

The protein belongs to the LRR-containing bacterial E3 ligase family. As to quaternary structure, also interacts with human and mouse U2AF1 (U2AF35). In terms of processing, ubiquitinated in the presence of host E1 ubiquitin-activating enzyme, E2 ubiquitin-conjugating enzyme and ubiquitin.

The protein localises to the secreted. It localises to the host cytoplasm. The protein resides in the host nucleus. The catalysed reaction is S-ubiquitinyl-[E2 ubiquitin-conjugating enzyme]-L-cysteine + [acceptor protein]-L-lysine = [E2 ubiquitin-conjugating enzyme]-L-cysteine + N(6)-ubiquitinyl-[acceptor protein]-L-lysine.. With respect to regulation, exists in an autoinhibited state in the absence of substrate protein, due to interactions of the leucine-rich repeats with NEL domain. Is activated upon binding to a substrate protein. Functionally, effector E3 ubiquitin ligase that interferes with host's ubiquitination pathway and modulates the acute inflammatory responses, thus facilitating bacterial colonization within the host cell. Interacts with IKBKG (NEMO) and TNIP1 (ABIN-1), a ubiquitin-binding adapter protein, which results in TNIP1-dependent 'Lys-27'-linked polyubiquitination of IKBKG. Consequently, polyubiquitinated IKBKG undergoes proteasome-dependent degradation, which perturbs NF-kappa-B activation during bacterial infection. Mediates polyubiquitination of host U2AF1, leading to its proteasomal degradation. Catalyzes 'Lys-48'-linked polyubiquitination and subsequent degradation of a subset of host guanylate-binding proteins (GBP1, GBP2, GBP4 and GBP6), thereby suppressing host cell defense. In contrast, host GBP3 and GBP7 are not ubiquitinated by IpaH9.8. Uses UBE2D2 (UBCH5B) as an E2 ubiquitin-conjugating enzyme. The sequence is that of E3 ubiquitin-protein ligase ipaH9.8 (ipaH9.8) from Shigella boydii serotype 18 (strain CDC 3083-94 / BS512).